Consider the following 841-residue polypeptide: Probable outer membrane usher protein EcpC (841 aa).

Positions M1 to A29 are cleaved as a signal peptide.

It belongs to the EcpC/MatD family.

Its function is as follows. Part of the ecpRABCDE operon, which encodes the E.coli common pilus (ECP). ECP is found in both commensal and pathogenic strains and plays a dual role in early-stage biofilm development and host cell recognition. This Escherichia coli O18:K1:H7 (strain IHE3034 / ExPEC) protein is Probable outer membrane usher protein EcpC (ecpC).